We begin with the raw amino-acid sequence, 312 residues long: Translation initiation factor IF3-2, chloroplastic (312 aa).

The transit peptide at 1–55 (MAGITSSTVGFNAVFTGITKTVSSHSLFSVDSKLCSLRLSKTELSFTNLTPSPRR) directs the protein to the chloroplast. The segment covering 253–263 (EMIRKPQEPPT) has biased composition (basic and acidic residues). A disordered region spans residues 253 to 312 (EMIRKPQEPPTRKKKKTAENEASASAAEITAEPEPEPEPEPEPEPEPEPEPEPEPLQIDS). A compositionally biased stretch (low complexity) spans 272–282 (NEASASAAEIT). A compositionally biased stretch (acidic residues) spans 283–305 (AEPEPEPEPEPEPEPEPEPEPEP).

The protein belongs to the IF-3 family. Monomer. As to expression, highly expressed in young, newly emerged leaves.

It localises to the plastid. The protein localises to the chloroplast. Functionally, chloroplast translation initiation factor that is essential for the coordination of leaf and chloroplast development. IF-3 binds to the 30S ribosomal subunit and shifts the equilibrium between 70S ribosomes and their 50S and 30S subunits in favor of the free subunits, thus enhancing the availability of 30S subunits on which protein synthesis initiation begins. The chain is Translation initiation factor IF3-2, chloroplastic from Arabidopsis thaliana (Mouse-ear cress).